Reading from the N-terminus, the 1411-residue chain is Early endosome antigen 1 (1411 aa).

The disordered stretch occupies residues 1–27; it reads MFRRILQRTPGRVGSQGSDLDSSATPI. Polar residues predominate over residues 15–27; that stretch reads SQGSDLDSSATPI. A C2H2-type zinc finger spans residues 41 to 64; sequence FICPQCMKSLGSADELFKHYQAVH. Serine 52 and serine 70 each carry phosphoserine. The stretch at 78 to 1348 forms a coiled coil; that stretch reads LALTRDDITL…IKHTQALNRK (1271 aa). Disordered regions lie at residues 476 to 501 and 1189 to 1217; these read STEL…QSAT and EKES…KEAK. The span at 481 to 490 shows a compositional bias: basic and acidic residues; that stretch reads HQLEKSKQQH. Positions 491–500 are enriched in low complexity; the sequence is QEQQALQQSA. An FYVE-type zinc finger spans residues 1352–1410; that stretch reads DNEVQNCMSCGKCFSVTVRRHHCRQCGNIFCAECSTKNALTPSSKKPVRVCDACFNDLQ. Zn(2+)-binding residues include cysteine 1358, cysteine 1361, cysteine 1374, cysteine 1377, cysteine 1382, cysteine 1385, cysteine 1402, and cysteine 1405.

As to quaternary structure, homodimer. Binds STX6. Binds RAB5A, RAB5B, RAB5C and RAB22A that have been activated by GTP-binding. Interacts with ERBB2. Interacts with RAB31. Interacts with SAMD9 and SAMD9L. May interact with PLEKHF2.

It localises to the cytoplasm. The protein resides in the early endosome membrane. In terms of biological role, binds phospholipid vesicles containing phosphatidylinositol 3-phosphate and participates in endosomal trafficking. This is Early endosome antigen 1 (Eea1) from Mus musculus (Mouse).